The primary structure comprises 318 residues: Thymidylate synthase (318 aa).

DUMP-binding positions include Arg-25 and 180–181 (RR). Cys-200 functions as the Nucleophile in the catalytic mechanism. Residues 220–223 (RSGD), Asn-231, and 261–263 (HIY) contribute to the dUMP site. Asp-223 provides a ligand contact to (6R)-5,10-methylene-5,6,7,8-tetrahydrofolate. Position 317 (Ala-317) interacts with (6R)-5,10-methylene-5,6,7,8-tetrahydrofolate.

The protein belongs to the thymidylate synthase family. Bacterial-type ThyA subfamily. Homodimer.

The protein localises to the cytoplasm. It catalyses the reaction dUMP + (6R)-5,10-methylene-5,6,7,8-tetrahydrofolate = 7,8-dihydrofolate + dTMP. It participates in pyrimidine metabolism; dTTP biosynthesis. In terms of biological role, catalyzes the reductive methylation of 2'-deoxyuridine-5'-monophosphate (dUMP) to 2'-deoxythymidine-5'-monophosphate (dTMP) while utilizing 5,10-methylenetetrahydrofolate (mTHF) as the methyl donor and reductant in the reaction, yielding dihydrofolate (DHF) as a by-product. This enzymatic reaction provides an intracellular de novo source of dTMP, an essential precursor for DNA biosynthesis. This is Thymidylate synthase from Lactobacillus delbrueckii subsp. bulgaricus (strain ATCC BAA-365 / Lb-18).